Here is a 978-residue protein sequence, read N- to C-terminus: Copper-transporting ATPase HMA4 (978 aa).

Residues 1 to 11 (MEQNGENHLKD) are compositionally biased toward basic and acidic residues. A disordered region spans residues 1-35 (MEQNGENHLKDPLLQADGGGSGASPAGASPRKERK). 3 consecutive HMA domains span residues 37–103 (RKVM…FEVD), 111–177 (AVCR…FGAD), and 186–252 (NKVH…QPPK). Cu(+) contacts are provided by Cys48, Cys51, Cys122, and Cys125. Transmembrane regions (helical) follow at residues 280–300 (FLWSCLFSVPVFMFSMVLPMI), 315–335 (MTIGMLLRWLLCSPVQFIIGW), 352–372 (MDVLVALGTNAAYFYSVYIVL), 385–405 (FFETSAMLISFILLGKYLEVV), 545–565 (FFVPTVVVAAFLTWLGWFVAG), 584–604 (LALQFGISVLVVACPCALGLA), 907–927 (VWALGYNVLGMPVAAGVLFPF), and 935–955 (WLAGACMAASSVSVVCSSLLL).

The protein belongs to the cation transport ATPase (P-type) (TC 3.A.3) family. Type IB subfamily. Highly expressed in roots. Expressed in vascular tissues of the stele, mainly in pericycle cells.

Its subcellular location is the vacuole membrane. The enzyme catalyses Cu(+)(in) + ATP + H2O = Cu(+)(out) + ADP + phosphate + H(+). Functionally, copper (Cu) transporter that mediates Cu transport in root vacuoles. Involved in Cu detoxification by sequestrating Cu into root vacuoles and limiting translocation of Cu from the roots to the shoots, and accumulation in grains. This is Copper-transporting ATPase HMA4 from Oryza sativa subsp. japonica (Rice).